A 1228-amino-acid polypeptide reads, in one-letter code: Clustered mitochondria protein homolog (1228 aa).

In terms of domain architecture, Clu spans 298-557; sequence PSSLPSNSID…DNNPLDVGFA (260 aa). The TPR 1 repeat unit spans residues 486 to 519; the sequence is CYGFDEASNKVIADAEFGSSLDDFAKVFHLKKHE. Residues 671–702 are a coiled coil; the sequence is LGRVIELAEQELEAQRALREAHLQQVEADNKE. 2 TPR repeats span residues 982–1015 and 1108–1141; these read AESY…YERV and AVNE…FSKE.

This sequence belongs to the CLU family. In terms of assembly, may associate with the eukaryotic translation initiation factor 3 (eIF-3) complex.

It localises to the cytoplasm. Functionally, mRNA-binding protein involved in proper cytoplasmic distribution of mitochondria. The polypeptide is Clustered mitochondria protein homolog (Eremothecium gossypii (strain ATCC 10895 / CBS 109.51 / FGSC 9923 / NRRL Y-1056) (Yeast)).